We begin with the raw amino-acid sequence, 285 residues long: Bifunctional protein FolD (285 aa).

Residues 165-167, Ser190, and Ile231 each bind NADP(+); that span reads GRS.

Belongs to the tetrahydrofolate dehydrogenase/cyclohydrolase family. Homodimer.

The enzyme catalyses (6R)-5,10-methylene-5,6,7,8-tetrahydrofolate + NADP(+) = (6R)-5,10-methenyltetrahydrofolate + NADPH. It catalyses the reaction (6R)-5,10-methenyltetrahydrofolate + H2O = (6R)-10-formyltetrahydrofolate + H(+). Its pathway is one-carbon metabolism; tetrahydrofolate interconversion. Its function is as follows. Catalyzes the oxidation of 5,10-methylenetetrahydrofolate to 5,10-methenyltetrahydrofolate and then the hydrolysis of 5,10-methenyltetrahydrofolate to 10-formyltetrahydrofolate. The polypeptide is Bifunctional protein FolD (Acetivibrio thermocellus (strain ATCC 27405 / DSM 1237 / JCM 9322 / NBRC 103400 / NCIMB 10682 / NRRL B-4536 / VPI 7372) (Clostridium thermocellum)).